The chain runs to 902 residues: HTH-type transcriptional regulator MalT (902 aa).

Ser-39 to Thr-46 provides a ligand contact to ATP. The 66-residue stretch at Glu-832 to Leu-897 folds into the HTH luxR-type domain. The segment at residues Asn-856–Arg-875 is a DNA-binding region (H-T-H motif).

This sequence belongs to the MalT family. In terms of assembly, monomer in solution. Oligomerizes to an active state in the presence of the positive effectors ATP and maltotriose.

Its activity is regulated as follows. Activated by ATP and maltotriose, which are both required for DNA binding. Functionally, positively regulates the transcription of the maltose regulon whose gene products are responsible for uptake and catabolism of malto-oligosaccharides. Specifically binds to the promoter region of its target genes, recognizing a short DNA motif called the MalT box. The sequence is that of HTH-type transcriptional regulator MalT from Vibrio cholerae serotype O1 (strain ATCC 39315 / El Tor Inaba N16961).